Consider the following 64-residue polypeptide: Large ribosomal subunit protein uL29 (64 aa).

It belongs to the universal ribosomal protein uL29 family.

The polypeptide is Large ribosomal subunit protein uL29 (Cupriavidus metallidurans (strain ATCC 43123 / DSM 2839 / NBRC 102507 / CH34) (Ralstonia metallidurans)).